Reading from the N-terminus, the 473-residue chain is Glycine--tRNA ligase (473 aa).

Positions 101 and 172 each coordinate substrate. Residues 204 to 206 (RNE), 214 to 219 (FRTREF), 289 to 290 (EL), and 333 to 336 (GVER) contribute to the ATP site. 219–223 (FEQME) serves as a coordination point for substrate. Residue 329-333 (EPSVG) participates in substrate binding.

This sequence belongs to the class-II aminoacyl-tRNA synthetase family. In terms of assembly, homodimer.

It is found in the cytoplasm. The enzyme catalyses tRNA(Gly) + glycine + ATP = glycyl-tRNA(Gly) + AMP + diphosphate. In terms of biological role, catalyzes the attachment of glycine to tRNA(Gly). In Ureaplasma parvum serovar 3 (strain ATCC 27815 / 27 / NCTC 11736), this protein is Glycine--tRNA ligase.